Here is a 239-residue protein sequence, read N- to C-terminus: Tetraspanin-9 (239 aa).

The next 3 helical transmembrane spans lie at F14–L34, L56–I76, and F86–V106. 2 N-linked (GlcNAc...) asparagine glycosylation sites follow: N180 and N181. The chain crosses the membrane as a helical span at residues V204–M224.

Belongs to the tetraspanin (TM4SF) family. As to quaternary structure, found in a complex with GP6. Post-translationally, glycosylated.

The protein resides in the membrane. The polypeptide is Tetraspanin-9 (TSPAN9) (Ovis aries (Sheep)).